A 621-amino-acid chain; its full sequence is uncharacterized protein (621 aa).

It localises to the plastid. It is found in the chloroplast. This is an uncharacterized protein from Porphyra purpurea (Red seaweed).